The sequence spans 236 residues: Small ribosomal subunit protein uS2c (236 aa).

The protein belongs to the universal ribosomal protein uS2 family.

It localises to the plastid. It is found in the chloroplast. The protein is Small ribosomal subunit protein uS2c (rps2) of Glycine max (Soybean).